Consider the following 533-residue polypeptide: Protein mono-ADP-ribosyltransferase PARP3 (533 aa).

Positions 1 to 30 are disordered; the sequence is MAPKRKASVQTEGSKKRRQGTEEEDSFRST. K6 is subject to N6-(ADP-ribosyl)lysine. E12 carries the ADP-ribosyl glutamic acid modification. Residues 14-18 carry the Nuclear localization signal motif; the sequence is SKKRR. Residues E24 and E32 each carry the ADP-ribosyl glutamic acid modification. A WGR domain is found at 57–147; that stretch reads GIQVHEDYDC…DRFVAQPNKY (91 aa). At D138 the chain carries ADP-ribosyl aspartic acid. ADP-ribosyl glutamic acid occurs at positions 160, 230, 309, and 310. Positions 181-299 constitute a PARP alpha-helical domain; sequence PCSLDPATQN…DIELAQTLQA (119 aa). Residues 313–533 enclose the PARP catalytic domain; it reads HPLDRDYQLL…RLRYLLEIHL (221 aa).

Belongs to the ARTD/PARP family. In terms of assembly, interacts with PARP1; leading to activate PARP1 in absence of DNA. Interacts with PRKDC. Interacts with XRCC5/Ku80; the interaction is dependent on nucleic acids. Interacts with XRCC6/Ku70; the interaction is dependent on nucleic acids. Interacts with EZH2, HDAC1, HDAC2, SUZ12, YY1, LRIG3 and LIG4. In terms of processing, auto-ADP-ribosylated.

It is found in the nucleus. The protein resides in the chromosome. The protein localises to the cytoplasm. It localises to the cytoskeleton. Its subcellular location is the microtubule organizing center. It is found in the centrosome. The protein resides in the centriole. It carries out the reaction L-aspartyl-[protein] + NAD(+) = 4-O-(ADP-D-ribosyl)-L-aspartyl-[protein] + nicotinamide. It catalyses the reaction L-glutamyl-[protein] + NAD(+) = 5-O-(ADP-D-ribosyl)-L-glutamyl-[protein] + nicotinamide. The enzyme catalyses L-lysyl-[protein] + NAD(+) = N(6)-(ADP-D-ribosyl)-L-lysyl-[protein] + nicotinamide + H(+). Functionally, mono-ADP-ribosyltransferase that mediates mono-ADP-ribosylation of target proteins and plays a key role in the response to DNA damage. Mediates mono-ADP-ribosylation of glutamate, aspartate or lysine residues on target proteins. In contrast to PARP1 and PARP2, it is not able to mediate poly-ADP-ribosylation. Involved in DNA repair by mediating mono-ADP-ribosylation of a limited number of acceptor proteins involved in chromatin architecture and in DNA metabolism, such as histone H2B, XRCC5 and XRCC6. ADP-ribosylation follows DNA damage and appears as an obligatory step in a detection/signaling pathway leading to the reparation of DNA strand breaks. Involved in single-strand break repair by catalyzing mono-ADP-ribosylation of histone H2B on 'Glu-2' (H2BE2ADPr) of nucleosomes containing nicked DNA. Cooperates with the XRCC5-XRCC6 (Ku80-Ku70) heterodimer to limit end-resection thereby promoting accurate NHEJ. Suppresses G-quadruplex (G4) structures in response to DNA damage. Associates with a number of DNA repair factors and is involved in the response to exogenous and endogenous DNA strand breaks. Together with APLF, promotes the retention of the LIG4-XRCC4 complex on chromatin and accelerate DNA ligation during non-homologous end-joining (NHEJ). May link the DNA damage surveillance network to the mitotic fidelity checkpoint. Acts as a negative regulator of immunoglobulin class switch recombination, probably by controlling the level of AICDA /AID on the chromatin. In addition to proteins, also able to ADP-ribosylate DNA: mediates DNA mono-ADP-ribosylation of DNA strand break termini via covalent addition of a single ADP-ribose moiety to a 5'- or 3'-terminal phosphate residues in DNA containing multiple strand breaks. In Mus musculus (Mouse), this protein is Protein mono-ADP-ribosyltransferase PARP3.